Here is a 420-residue protein sequence, read N- to C-terminus: Protein maelstrom homolog (420 aa).

A DNA-binding region (HMG box) is located at residues 4–73 (RRASRNAYYF…AQGKDSGPSE (70 aa)). 3 disordered regions span residues 62 to 94 (RAAQ…KQNV), 341 to 372 (GFSH…GQNS), and 392 to 420 (NIHK…SSLS). 2 stretches are compositionally biased toward polar residues: residues 344–358 (HFSS…NTPT) and 392–407 (NIHK…SPYT).

This sequence belongs to the maelstrom family. Interacts with SMARCB1, SIN3B and DDX4. Interacts with piRNA-associated proteins TDRD1, PIWIL1 and PIWIL2. Interacts with TEX19.

The protein localises to the cytoplasm. The protein resides in the nucleus. In terms of biological role, plays a central role during spermatogenesis by repressing transposable elements and preventing their mobilization, which is essential for the germline integrity. Acts via the piRNA metabolic process, which mediates the repression of transposable elements during meiosis by forming complexes composed of piRNAs and Piwi proteins and governs the methylation and subsequent repression of transposons. Its association with piP-bodies suggests a participation in the secondary piRNAs metabolic process. Required for the localization of germ-cell factors to the meiotic nuage. This Bos taurus (Bovine) protein is Protein maelstrom homolog (MAEL).